The following is a 591-amino-acid chain: Melatonin-related receptor (591 aa).

Residues 1–38 lie on the Extracellular side of the membrane; it reads MATVPKSNMGPTKAVPTPFGCIGCKLPKPDYPPALIIF. A helical transmembrane segment spans residues 39 to 59; it reads MFCAMVITVVVDLIGNSMVIL. The Cytoplasmic segment spans residues 60–72; it reads AVTKNKKLRNSGN. The chain crosses the membrane as a helical span at residues 73–93; it reads IFVASLSVADMLVAIYPYPLM. Topologically, residues 94–111 are extracellular; sequence LYAMSVGGWDLSQLQCQM. An intrachain disulfide couples Cys-109 to Cys-186. A helical membrane pass occupies residues 112-132; sequence VGLVTGLSVVGSIFNITAIAI. At 133-151 the chain is on the cytoplasmic side; it reads NRYCYICHSLQYKRIFSLR. A helical transmembrane segment spans residues 152–172; that stretch reads NTCIYLVVTWVMTVLAVLPNM. The Extracellular segment spans residues 173–196; that stretch reads YIGTIEYDPRTYTCIFNYVNNPAF. The helical transmembrane segment at 197 to 217 threads the bilayer; it reads TVTIVCIHFVLPLIIVGYCYT. Over 218 to 247 the chain is Cytoplasmic; that stretch reads KIWIKVLAARDPAGQNPDNQFAEVRNFLTM. Residues 248–268 traverse the membrane as a helical segment; that stretch reads FVIFLLFAVCWCPVNVLTVLV. Residues 269-281 are Extracellular-facing; the sequence is AVIPKEMAGKIPN. The helical transmembrane segment at 282–302 threads the bilayer; sequence WLYLAAYCIAYFNSCLNAIIY. The Cytoplasmic portion of the chain corresponds to 303–591; the sequence is GILNESFRRE…DSDCSDEMAV (289 aa). Positions 378–427 are disordered; that stretch reads LPGDASAPHSDRASVRPKPQTRSTSVYRKPASIHHKSISGHPKSASVYPK.

It belongs to the G-protein coupled receptor 1 family. As to quaternary structure, homodimer, and heterodimer with MTNR1A and MTNR1B. Interacts with KAT5. Interacts with RTN4 isoform A/NOGO-A. Interacts with TGFBR1. As to expression, strongly expressed in the brain with highly restricted pattern of expression, confined to a subset of the ependymal cells of the third ventricle and a population of cells in the dorsomedial hypothalamic nucleus.

The protein localises to the cell membrane. Its subcellular location is the postsynaptic density. G protein-coupled receptor that plays a role in numerous physiological processes including regulation of energy metabolism, neurite outgrowth or cell migration. Promotes self-renewal and neuronal differentiation of neural progenitor cells through activation of the NOTCH and WNT/beta-catenin signaling pathways. Modulates the KAT5-dependent glucocorticoid receptor signaling by modulating KAT5 subcellular compartmentalisation. Also plays a role in the activation TGFBR1 in the absence of TGFBR2 by interfering with FKBP1A binding to TGFBR1, leading to induction of both canonical and non-canonical SMAD signaling pathways resulting in inhibition of proliferation or promotion of migration. The sequence is that of Melatonin-related receptor (Gpr50) from Mus musculus (Mouse).